We begin with the raw amino-acid sequence, 238 residues long: Thymidine kinase, cytosolic (238 aa).

Ser2 carries the post-translational modification N-acetylserine. Phosphoserine is present on residues Ser2 and Ser13. Residues 26 to 33, 58 to 60, and 97 to 100 each bind ATP; these read GPMFSGKS, DTR, and DEGQ. Glu98 serves as the catalytic Proton acceptor. Position 128 (Phe128) interacts with substrate. Cys153 and Cys156 together coordinate Zn(2+). Substrate-binding positions include 172–176 and Tyr181; that span reads VEVIG. Cys185 and Cys188 together coordinate Zn(2+). Positions 206-208 match the KEN box motif; that stretch reads KEN. Residue Ser235 is modified to Phosphoserine.

It belongs to the thymidine kinase family. As to quaternary structure, homotetramer. Tetramerization from dimerization is induced by ATP and increases catalytic efficiency due to a high affinity for thymidine. Tetramerization is inhibited by phosphorylation at Ser-13. Interacts (via the KEN box) with FZR1. In terms of processing, phosphorylated on Ser-13 in mitosis. Phosphorylation of Ser-13 by CDK1 during mitosis reduces homotetramerization and catalytic efficiency when DNA replication is complete and intracellular TK1 is still present at a high level. Post-translationally, polyubiquitinated. Postmitosis, ubiquitination leads to proteasomal degradation. The KEN box sequence located at the C-terminal region targets for degradation by the anaphase promoting complex (APC/C) activated and rate-limited by FZR1.

The protein localises to the cytoplasm. It catalyses the reaction thymidine + ATP = dTMP + ADP + H(+). Cell-cycle-regulated enzyme of importance in nucleotide metabolism. Catalyzes the first enzymatic step in the salvage pathway converting thymidine into thymidine monophosphate. Transcriptional regulation limits expression to the S phase of the cell cycle and transient expression coincides with the oscillation in the intracellular dTTP concentration. The protein is Thymidine kinase, cytosolic (TK1) of Bos taurus (Bovine).